We begin with the raw amino-acid sequence, 147 residues long: Arginine repressor (147 aa).

The protein belongs to the ArgR family.

The protein localises to the cytoplasm. It functions in the pathway amino-acid biosynthesis; L-arginine biosynthesis [regulation]. Regulates arginine biosynthesis genes. This chain is Arginine repressor, found in Chlamydia felis (strain Fe/C-56) (Chlamydophila felis).